The following is a 295-amino-acid chain: Protein FAM221A (295 aa).

The tract at residues 244 to 295 (SEPPGIDKQVSSMRLSEEDDMAYFERRYQERLRKEKEHKRQKNSKPPTTQRP) is disordered. The segment covering 266–278 (YFERRYQERLRKE) has biased composition (basic and acidic residues).

This sequence belongs to the FAM221 family.

In Xenopus laevis (African clawed frog), this protein is Protein FAM221A (fam221a).